Consider the following 208-residue polypeptide: Uracil phosphoribosyltransferase (208 aa).

5-phospho-alpha-D-ribose 1-diphosphate is bound by residues Arg78, Arg103, and 130 to 138; that span reads DPMLATGGS. Uracil is bound by residues Ile193 and 198 to 200; that span reads GDA. Asp199 is a binding site for 5-phospho-alpha-D-ribose 1-diphosphate.

The protein belongs to the UPRTase family. The cofactor is Mg(2+).

It catalyses the reaction UMP + diphosphate = 5-phospho-alpha-D-ribose 1-diphosphate + uracil. Its pathway is pyrimidine metabolism; UMP biosynthesis via salvage pathway; UMP from uracil: step 1/1. Allosterically activated by GTP. Its function is as follows. Catalyzes the conversion of uracil and 5-phospho-alpha-D-ribose 1-diphosphate (PRPP) to UMP and diphosphate. This is Uracil phosphoribosyltransferase from Blochmanniella pennsylvanica (strain BPEN).